Reading from the N-terminus, the 463-residue chain is Arginine biosynthesis bifunctional protein ArgJ, chloroplastic (463 aa).

Substrate-binding residues include T207, K233, T244, E331, N458, and T463. The Nucleophile role is filled by T244.

This sequence belongs to the ArgJ family. In terms of assembly, heterodimer of an alpha and a beta chain.

It localises to the plastid. The protein localises to the chloroplast. The catalysed reaction is N(2)-acetyl-L-ornithine + L-glutamate = N-acetyl-L-glutamate + L-ornithine. It carries out the reaction L-glutamate + acetyl-CoA = N-acetyl-L-glutamate + CoA + H(+). Its pathway is amino-acid biosynthesis; L-arginine biosynthesis; L-ornithine and N-acetyl-L-glutamate from L-glutamate and N(2)-acetyl-L-ornithine (cyclic): step 1/1. It participates in amino-acid biosynthesis; L-arginine biosynthesis; N(2)-acetyl-L-ornithine from L-glutamate: step 1/4. In terms of biological role, catalyzes two activities which are involved in the cyclic version of arginine biosynthesis: the synthesis of acetylglutamate from glutamate and acetyl-CoA, and of ornithine by transacetylation between acetylornithine and glutamate. In Oryza sativa subsp. japonica (Rice), this protein is Arginine biosynthesis bifunctional protein ArgJ, chloroplastic.